Here is a 383-residue protein sequence, read N- to C-terminus: Non-structural maintenance of chromosomes element 4 homolog B (383 aa).

Residues 1–22 (MRNSVKWETELTGDRSRRREAD) show a composition bias toward basic and acidic residues. 3 disordered regions span residues 1 to 59 (MRNS…EQGI), 198 to 231 (MKQRKSRVGNRKRTKPGAGVKPEEVDDTEAEKKS), and 355 to 383 (QGSVIQEETVVEDSSNMEGDNEDSKNGGL). A compositionally biased stretch (basic residues) spans 201–212 (RKSRVGNRKRTK). Residues 355-372 (QGSVIQEETVVEDSSNME) show a composition bias toward polar residues.

The protein belongs to the NSE4 family. In terms of assembly, interacts with SMC5, SMC6A or SMC6B. The SMC5-SMC6 complex is composed of the SMC5 and SMC6 heterodimer attached via their hinge domain and from the non-SMC subunit NSE4A or NSE4B. In terms of tissue distribution, not expressed in seedlings, rosette leaves and floral buds.

It localises to the nucleus. Functionally, component of the SMC5-SMC6 complex, that promotes sister chromatid alignment after DNA damage and facilitates double-stranded DNA breaks (DSBs) repair via homologous recombination between sister chromatids. This is Non-structural maintenance of chromosomes element 4 homolog B (NSE4B) from Arabidopsis thaliana (Mouse-ear cress).